The chain runs to 384 residues: DNA replication and repair protein RecF (384 aa).

43–50 (GENGSGKT) provides a ligand contact to ATP.

Belongs to the RecF family.

It is found in the cytoplasm. In terms of biological role, the RecF protein is involved in DNA metabolism; it is required for DNA replication and normal SOS inducibility. RecF binds preferentially to single-stranded, linear DNA. It also seems to bind ATP. The polypeptide is DNA replication and repair protein RecF (Brucella abortus (strain 2308)).